Reading from the N-terminus, the 499-residue chain is Maturase K (499 aa).

Belongs to the intron maturase 2 family. MatK subfamily.

Its subcellular location is the plastid. The protein resides in the chloroplast. Its function is as follows. Usually encoded in the trnK tRNA gene intron. Probably assists in splicing its own and other chloroplast group II introns. In Camellia sinensis (Tea plant), this protein is Maturase K.